Here is a 421-residue protein sequence, read N- to C-terminus: uncharacterized protein (421 aa).

A TRAM domain is found at D14–Q72. S-adenosyl-L-methionine is bound by residues Q250, Y286, E308, and D349. Residue C376 is the Nucleophile of the active site.

This sequence belongs to the class I-like SAM-binding methyltransferase superfamily. RNA M5U methyltransferase family.

This is an uncharacterized protein from Corynebacterium efficiens (strain DSM 44549 / YS-314 / AJ 12310 / JCM 11189 / NBRC 100395).